Here is a 737-residue protein sequence, read N- to C-terminus: MEDPLSSYKLIKDLRSGGEGKAILYEKDGVKYVGKKRLFDNLKDANQGLKEAMSLARIVHPNTVRFEDAIMTQIGDQIEITIMMEFCEMGDLLDFLIELSEPQHHHTVTLGSELSSLNLGSEYTGSDIDSTTSRTSSSSSTNFEAALLLENNNNNTIQHSHSSSSLVNGTTSPTNATTPPITTTTPNNRHSISTPTLAGTTTATTASPSSPSSPSSPSSPSSPSSPLSPQQHPVTSPQRKSSKSERKKKCSLKERKCIVKMTVDLTKKIFKKDNSNHTTAATTTTTTNTTHSSSSSSNLNIEEHVIHSNEIKKGVDSIYLIEQTQLIEWLLDLSYGVQALHRASMIHRDLKSENIFISGSNKLKIGDFGLAIQSAHHTGSIHSETVGTYCYSSPEILNSTYDKTTDIFSLGCIFYELITLKLLSHNRIYLGEDMLNDRFDSMQFLSTFPEKYEKLAPLVLSMISKNPTFRPSIESIIETLQKMDTSLLKERVVIKRENTIKGIRKQLDKSHFQEASLLLATSFVKDPRFFNIFPPSDPHSIPHLQHLYKYILKVLSSYNCSIWGYFAIDGTMVSCFVWLNPEKKKEIRLSDCIKGSLSLVTKIGLKRVGLILDLMRFDDNILSMAQNNNNNPNTSTSNLQTFKGSSSSSSSSCNHWFLAYCCTSEIFRGNGIGSHMIENVLNWADHNGVETRTVVFENNSIEFFQHHGFEVGSEFKSNLPKGVNKVMVLVRKPKQIY.

A Protein kinase domain is found at 8 to 488 (YKLIKDLRSG…TLQKMDTSLL (481 aa)). Residues 14-22 (LRSGGEGKA) and K36 contribute to the ATP site. 2 disordered regions span residues 155-251 (NTIQ…KKCS) and 278-298 (TTAATTTTTTNTTHSSSSSSN). The span at 156 to 167 (TIQHSHSSSSLV) shows a compositional bias: polar residues. Low complexity predominate over residues 168 to 229 (NGTTSPTNAT…PSSPSSPLSP (62 aa)). The Proton acceptor role is filled by D349.

Belongs to the protein kinase superfamily. NEK Ser/Thr protein kinase family. NIMA subfamily.

It carries out the reaction L-seryl-[protein] + ATP = O-phospho-L-seryl-[protein] + ADP + H(+). The enzyme catalyses L-threonyl-[protein] + ATP = O-phospho-L-threonyl-[protein] + ADP + H(+). In Dictyostelium discoideum (Social amoeba), this protein is Probable serine/threonine-protein kinase DDB_G0269628.